A 485-amino-acid polypeptide reads, in one-letter code: Glutamyl-tRNA(Gln) amidotransferase subunit A (485 aa).

Residues Lys-75 and Ser-150 each act as charge relay system in the active site. Ser-174 functions as the Acyl-ester intermediate in the catalytic mechanism.

The protein belongs to the amidase family. GatA subfamily. Heterotrimer of A, B and C subunits.

The enzyme catalyses L-glutamyl-tRNA(Gln) + L-glutamine + ATP + H2O = L-glutaminyl-tRNA(Gln) + L-glutamate + ADP + phosphate + H(+). Functionally, allows the formation of correctly charged Gln-tRNA(Gln) through the transamidation of misacylated Glu-tRNA(Gln) in organisms which lack glutaminyl-tRNA synthetase. The reaction takes place in the presence of glutamine and ATP through an activated gamma-phospho-Glu-tRNA(Gln). The sequence is that of Glutamyl-tRNA(Gln) amidotransferase subunit A from Picosynechococcus sp. (strain ATCC 27264 / PCC 7002 / PR-6) (Agmenellum quadruplicatum).